Reading from the N-terminus, the 277-residue chain is Diaminopimelate epimerase (277 aa).

Substrate-binding residues include Asn17, Gln50, and Asn68. Cys77 serves as the catalytic Proton donor. Residues 78–79, Asn162, Asn195, and 213–214 contribute to the substrate site; these read GN and ER. The active-site Proton acceptor is the Cys222. Residue 223–224 participates in substrate binding; it reads GT.

It belongs to the diaminopimelate epimerase family. As to quaternary structure, homodimer.

It is found in the cytoplasm. The enzyme catalyses (2S,6S)-2,6-diaminopimelate = meso-2,6-diaminopimelate. It participates in amino-acid biosynthesis; L-lysine biosynthesis via DAP pathway; DL-2,6-diaminopimelate from LL-2,6-diaminopimelate: step 1/1. Functionally, catalyzes the stereoinversion of LL-2,6-diaminopimelate (L,L-DAP) to meso-diaminopimelate (meso-DAP), a precursor of L-lysine and an essential component of the bacterial peptidoglycan. This is Diaminopimelate epimerase from Phenylobacterium zucineum (strain HLK1).